Consider the following 156-residue polypeptide: Small ribosomal subunit protein uS7 (156 aa).

Belongs to the universal ribosomal protein uS7 family. As to quaternary structure, part of the 30S ribosomal subunit. Contacts proteins S9 and S11.

In terms of biological role, one of the primary rRNA binding proteins, it binds directly to 16S rRNA where it nucleates assembly of the head domain of the 30S subunit. Is located at the subunit interface close to the decoding center, probably blocks exit of the E-site tRNA. In Solibacter usitatus (strain Ellin6076), this protein is Small ribosomal subunit protein uS7.